The following is a 453-amino-acid chain: tRNA modification GTPase MnmE (453 aa).

The (6S)-5-formyl-5,6,7,8-tetrahydrofolate site is built by R28, E90, and R129. The TrmE-type G domain maps to 224–375 (GLRVAIIGRP…LSSALLKLCG (152 aa)). K(+) is bound at residue N234. GTP is bound by residues 234–239 (NVGKSS), 253–259 (TDLPGTT), 278–281 (DTAG), and 356–358 (SAR). S238 contributes to the Mg(2+) binding site. T253, L255, and T258 together coordinate K(+). T259 lines the Mg(2+) pocket. Position 453 (K453) interacts with (6S)-5-formyl-5,6,7,8-tetrahydrofolate.

Belongs to the TRAFAC class TrmE-Era-EngA-EngB-Septin-like GTPase superfamily. TrmE GTPase family. As to quaternary structure, homodimer. Heterotetramer of two MnmE and two MnmG subunits. Requires K(+) as cofactor.

It localises to the cytoplasm. Its function is as follows. Exhibits a very high intrinsic GTPase hydrolysis rate. Involved in the addition of a carboxymethylaminomethyl (cmnm) group at the wobble position (U34) of certain tRNAs, forming tRNA-cmnm(5)s(2)U34. The chain is tRNA modification GTPase MnmE from Synechococcus sp. (strain RCC307).